The chain runs to 320 residues: ATP-dependent 6-phosphofructokinase (320 aa).

ATP is bound at residue Gly-11. Arg-21–Arg-25 is a binding site for ADP. Residues Arg-72–Tyr-73 and Gly-102–Ser-105 contribute to the ATP site. Position 103 (Asp-103) interacts with Mg(2+). Thr-125–Asp-127 serves as a coordination point for substrate. The Proton acceptor role is filled by Asp-127. Arg-154 provides a ligand contact to ADP. Residues Arg-162 and Met-169 to Arg-171 each bind substrate. ADP-binding positions include Gly-185–Asp-187, Arg-211, and Lys-213–His-215. Substrate-binding positions include Glu-222, Arg-243, and His-249–Arg-252.

The protein belongs to the phosphofructokinase type A (PFKA) family. ATP-dependent PFK group I subfamily. Prokaryotic clade 'B1' sub-subfamily. In terms of assembly, homotetramer. Mg(2+) serves as cofactor.

The protein localises to the cytoplasm. It carries out the reaction beta-D-fructose 6-phosphate + ATP = beta-D-fructose 1,6-bisphosphate + ADP + H(+). The protein operates within carbohydrate degradation; glycolysis; D-glyceraldehyde 3-phosphate and glycerone phosphate from D-glucose: step 3/4. With respect to regulation, allosterically activated by ADP and other diphosphonucleosides, and allosterically inhibited by phosphoenolpyruvate. Its function is as follows. Catalyzes the phosphorylation of D-fructose 6-phosphate to fructose 1,6-bisphosphate by ATP, the first committing step of glycolysis. This Enterococcus faecalis (strain ATCC 700802 / V583) protein is ATP-dependent 6-phosphofructokinase.